The sequence spans 829 residues: MDEVSPTKHFTSKPLLPTKTPRDKAISHYVNALNSPRNVVKTEIPECGIQIIDGDGNFASTDTRERPSLKNYILSKPEFLKRGMDYNAVGILGAQSSGKSTLLNYLFNTKFRILNEVMGRSRTTHGVWMALSGKESNIVVFDLEGTDGSAREDDYSFERKTSLFSLSVCSVLMVNLWSHDVGRFQASNMSLLKTVFELNLQLFVKEETPKTLIVFVIRDREADTPFDQIERDIMEDIMRIWDSVIPPEKFINSPINRFFDFQFTSLPHYEHFYENFVEEVNLMKKKFDPKNKETYFLPQYNKEIPADGLSCFCEQIWETIKDNKDLDLPSQREMLSRYRCTEISNQIYKEFNDSIKGEMKTLKKGNIIEEFKKIMTKEIDTAIEKYKEVTERYMESIVEEIEEQLKKQLYGLVESLFERQAELMEKAIGKRVKGEFTIIRNEYALLYNKKEFNPMKYQKYSQELSRTKAVIERDWRKQFDESVPKFLAEKTKEKFNSVCKDIGIAYEDAVSKMAEVMKQHFGDYLESTIKPKITPYLEACKKDMWKNIRNVINTQFTNGFNKLEEGFKTCSNMNKDTIEEEIKKSKIDILNIIKELVIKRKTELPYLLERKFNNIFRFDNKGLPRKWEPTDDVDTLYFTARDETEDILDMYCYFRIEENDDQFKFTINYRDGDLPSESIEALPEGADEDKIILNHQERKELIETLNEFFEKGYLIALREKENSEIKYQIPLYLIVLVIFFGFDEFIAILTNPLLFILTLIIGGGIYIGYKLNLGGVAKNYIQYLLSMSLSSTMEYLRTIPFFTPLIDKIWPKDDNKDDDSTEETQEETK.

A disordered region spans residues 1 to 21 (MDEVSPTKHFTSKPLLPTKTP). The Cytoplasmic segment spans residues 1 to 728 (MDEVSPTKHF…EKENSEIKYQ (728 aa)). Positions 83 to 305 (GMDYNAVGIL…FLPQYNKEIP (223 aa)) constitute a GB1/RHD3-type G domain. 93 to 100 (GAQSSGKS) lines the GTP pocket. 2 coiled-coil regions span residues 372–396 (KKIM…YMES) and 576–596 (DTIE…IKEL). A helical membrane pass occupies residues 729-749 (IPLYLIVLVIFFGFDEFIAIL). Residues 750–752 (TNP) lie on the Lumenal side of the membrane. A helical transmembrane segment spans residues 753–773 (LLFILTLIIGGGIYIGYKLNL). Over 774-829 (GGVAKNYIQYLLSMSLSSTMEYLRTIPFFTPLIDKIWPKDDNKDDDSTEETQEETK) the chain is Cytoplasmic.

Belongs to the TRAFAC class dynamin-like GTPase superfamily. GB1/RHD3 GTPase family. RHD3 subfamily.

It localises to the endoplasmic reticulum membrane. Probable GTP-binding protein that may be involved in cell development. This is Protein SEY1 homolog 2 from Entamoeba dispar (strain ATCC PRA-260 / SAW760).